Reading from the N-terminus, the 102-residue chain is Small ribosomal subunit protein uS10 (102 aa).

The protein belongs to the universal ribosomal protein uS10 family. Part of the 30S ribosomal subunit.

Functionally, involved in the binding of tRNA to the ribosomes. This is Small ribosomal subunit protein uS10 from Streptococcus sanguinis (strain SK36).